Reading from the N-terminus, the 130-residue chain is Small ribosomal subunit protein uS9 (130 aa).

Residues 111–130 (VERKKVGLRKARRRPQFSKR) are disordered. Positions 116–130 (VGLRKARRRPQFSKR) are enriched in basic residues.

It belongs to the universal ribosomal protein uS9 family.

The sequence is that of Small ribosomal subunit protein uS9 from Enterobacter sp. (strain 638).